A 185-amino-acid polypeptide reads, in one-letter code: Peptide deformylase (185 aa).

Fe cation contacts are provided by Cys94 and His136. The active site involves Glu137. His140 is a binding site for Fe cation.

It belongs to the polypeptide deformylase family. It depends on Fe(2+) as a cofactor.

The catalysed reaction is N-terminal N-formyl-L-methionyl-[peptide] + H2O = N-terminal L-methionyl-[peptide] + formate. In terms of biological role, removes the formyl group from the N-terminal Met of newly synthesized proteins. Requires at least a dipeptide for an efficient rate of reaction. N-terminal L-methionine is a prerequisite for activity but the enzyme has broad specificity at other positions. The polypeptide is Peptide deformylase (Chlorobium limicola (strain DSM 245 / NBRC 103803 / 6330)).